A 330-amino-acid chain; its full sequence is Uroporphyrinogen decarboxylase (330 aa).

Substrate is bound by residues 10 to 14 (RQAGR), phenylalanine 29, serine 59, aspartate 60, tyrosine 137, serine 192, and histidine 307.

This sequence belongs to the uroporphyrinogen decarboxylase family. Homodimer.

It is found in the plastid. The protein resides in the chloroplast. The enzyme catalyses uroporphyrinogen III + 4 H(+) = coproporphyrinogen III + 4 CO2. It functions in the pathway porphyrin-containing compound metabolism; protoporphyrin-IX biosynthesis; coproporphyrinogen-III from 5-aminolevulinate: step 4/4. Functionally, catalyzes the decarboxylation of four acetate groups of uroporphyrinogen-III to yield coproporphyrinogen-III. The chain is Uroporphyrinogen decarboxylase (DCUP) from Hordeum vulgare (Barley).